The following is a 178-amino-acid chain: Ribulose bisphosphate carboxylase small subunit, chloroplastic 2 (178 aa).

Residues 1 to 54 (MASISSTVATVSRAAPAQANMVAPFTGLKSNVAFPATKKANDFSTLPSNGGRVQ) constitute a chloroplast transit peptide.

It belongs to the RuBisCO small chain family. Heterohexadecamer of 8 large and 8 small subunits.

The protein resides in the plastid. It localises to the chloroplast. Its function is as follows. RuBisCO catalyzes two reactions: the carboxylation of D-ribulose 1,5-bisphosphate, the primary event in carbon dioxide fixation, as well as the oxidative fragmentation of the pentose substrate. Both reactions occur simultaneously and in competition at the same active site. Although the small subunit is not catalytic it is essential for maximal activity. This chain is Ribulose bisphosphate carboxylase small subunit, chloroplastic 2, found in Flaveria pringlei.